Here is a 355-residue protein sequence, read N- to C-terminus: Chemerin-like receptor 2 (355 aa).

The Extracellular segment spans residues 1–41 (MEDLEETLFEEFENYSYALDYYSLESDLEEKVQLGVVHWVS). Residue N14 is glycosylated (N-linked (GlcNAc...) asparagine). The helical transmembrane segment at 42 to 62 (LVLYCLSFVLGIPGNAIVIWF) threads the bilayer. At 63-73 (TGFKWKKTVST) the chain is on the cytoplasmic side. The helical transmembrane segment at 74–94 (LWFLNLAIADFIFLLFLPLYI) threads the bilayer. The Extracellular segment spans residues 95–112 (SYVVMNFHWPFGIWLCKA). A disulfide bridge connects residues C110 and C187. Residues 113–133 (NSFTAQLNMFASVFFLTVISL) traverse the membrane as a helical segment. The Cytoplasmic segment spans residues 134 to 154 (DHYIHLIHPVLSHRHRTLKNS). Residues 155–175 (LIVIIFIWLLASLIGGPALYF) traverse the membrane as a helical segment. Residues 176-210 (RDTVEFNNHTLCYNNFQKHDPDLTVIRHHVLTWVK) lie on the Extracellular side of the membrane. The helical transmembrane segment at 211–231 (FIVGYLFPLLTMSICYLCLIF) threads the bilayer. Residues 232–247 (KVKKRSILISSRHFWT) are Cytoplasmic-facing. Residues 248 to 268 (ILAVVVAFVVCWTPYHLFSIW) form a helical membrane-spanning segment. Over 269 to 286 (ELTIHHNSYSHHVMQAGI) the chain is Extracellular. The chain crosses the membrane as a helical span at residues 287–307 (PLSTGLAFLNSCLNPILYVLI). Topologically, residues 308–355 (SKKFQARFRSSVAEILKYTLWEVSCSGTVSEQLRNSETKNLCLLETAQ) are cytoplasmic.

This sequence belongs to the chemokine-like receptor (CMKLR) family.

The protein resides in the cell membrane. In terms of biological role, receptor for chemoattractant adipokine chemerin/RARRES2 suggesting a role for this receptor in the regulation of inflammation and energy homesotasis. Signals mainly via beta-arrestin pathway. Binding of RARRES2 activates weakly G proteins, calcium mobilization and MAPK1/MAPK3 (ERK1/2) phosphorylation too. Acts also as a receptor for TAFA1, mediates its effects on neuronal stem-cell proliferation and differentiation via the activation of ROCK/ERK and ROCK/STAT3 signaling pathway. In Macaca mulatta (Rhesus macaque), this protein is Chemerin-like receptor 2 (CMKLR2).